Consider the following 72-residue polypeptide: Multiple antibiotic resistance protein MarB (72 aa).

The chain is Multiple antibiotic resistance protein MarB (marB) from Escherichia coli (strain K12).